A 126-amino-acid polypeptide reads, in one-letter code: UPF0047 protein AF_2050 (126 aa).

The protein belongs to the UPF0047 family.

In Archaeoglobus fulgidus (strain ATCC 49558 / DSM 4304 / JCM 9628 / NBRC 100126 / VC-16), this protein is UPF0047 protein AF_2050.